A 540-amino-acid chain; its full sequence is Glucose-6-phosphate isomerase (540 aa).

Glu-350 (proton donor) is an active-site residue. Residues His-381 and Lys-503 contribute to the active site.

Belongs to the GPI family.

The protein resides in the cytoplasm. It carries out the reaction alpha-D-glucose 6-phosphate = beta-D-fructose 6-phosphate. It participates in carbohydrate biosynthesis; gluconeogenesis. Its pathway is carbohydrate degradation; glycolysis; D-glyceraldehyde 3-phosphate and glycerone phosphate from D-glucose: step 2/4. Its function is as follows. Catalyzes the reversible isomerization of glucose-6-phosphate to fructose-6-phosphate. The chain is Glucose-6-phosphate isomerase from Burkholderia pseudomallei (strain 668).